The sequence spans 208 residues: Glutathione S-transferase P (208 aa).

The region spanning Met-1–Gly-78 is the GST N-terminal domain. Residues Tyr-7, Trp-38, Lys-42, Gln-49 to Val-50, and Gln-62 to Ser-63 each bind glutathione. Residues Asn-80–Val-202 form the GST C-terminal domain.

The protein belongs to the GST superfamily. Pi family. Homodimer. In terms of tissue distribution, expressed in dopaminergic (DA) neuron (at protein levels).

It carries out the reaction RX + glutathione = an S-substituted glutathione + a halide anion + H(+). In terms of biological role, conjugation of reduced glutathione to a wide number of exogenous and endogenous hydrophobic electrophiles. Prevents dopaminergic CEP neuron degeneration in response to Mn(2+). This Caenorhabditis elegans protein is Glutathione S-transferase P (gst-1).